A 434-amino-acid polypeptide reads, in one-letter code: 3-phosphoshikimate 1-carboxyvinyltransferase (434 aa).

The 3-phosphoshikimate site is built by Lys-22, Ser-23, and Arg-27. Lys-22 is a binding site for phosphoenolpyruvate. Residues Gly-93 and Arg-121 each contribute to the phosphoenolpyruvate site. 3-phosphoshikimate is bound by residues Ser-168, Ser-169, Gln-170, Ser-199, Asp-320, and Lys-347. Gln-170 serves as a coordination point for phosphoenolpyruvate. Asp-320 (proton acceptor) is an active-site residue. Arg-351, Arg-394, and Lys-419 together coordinate phosphoenolpyruvate.

Belongs to the EPSP synthase family. In terms of assembly, monomer.

It localises to the cytoplasm. It catalyses the reaction 3-phosphoshikimate + phosphoenolpyruvate = 5-O-(1-carboxyvinyl)-3-phosphoshikimate + phosphate. Its pathway is metabolic intermediate biosynthesis; chorismate biosynthesis; chorismate from D-erythrose 4-phosphate and phosphoenolpyruvate: step 6/7. Its function is as follows. Catalyzes the transfer of the enolpyruvyl moiety of phosphoenolpyruvate (PEP) to the 5-hydroxyl of shikimate-3-phosphate (S3P) to produce enolpyruvyl shikimate-3-phosphate and inorganic phosphate. The polypeptide is 3-phosphoshikimate 1-carboxyvinyltransferase (Burkholderia orbicola (strain AU 1054)).